The sequence spans 310 residues: Ribose-phosphate pyrophosphokinase (310 aa).

ATP contacts are provided by residues 34–36 (DGE) and 93–94 (RQ). H127 and D167 together coordinate Mg(2+). Residue K190 is part of the active site. D-ribose 5-phosphate-binding positions include R192, D216, and 220–224 (DSGGT).

This sequence belongs to the ribose-phosphate pyrophosphokinase family. Class I subfamily. Homohexamer. The cofactor is Mg(2+).

Its subcellular location is the cytoplasm. The catalysed reaction is D-ribose 5-phosphate + ATP = 5-phospho-alpha-D-ribose 1-diphosphate + AMP + H(+). It participates in metabolic intermediate biosynthesis; 5-phospho-alpha-D-ribose 1-diphosphate biosynthesis; 5-phospho-alpha-D-ribose 1-diphosphate from D-ribose 5-phosphate (route I): step 1/1. Involved in the biosynthesis of the central metabolite phospho-alpha-D-ribosyl-1-pyrophosphate (PRPP) via the transfer of pyrophosphoryl group from ATP to 1-hydroxyl of ribose-5-phosphate (Rib-5-P). The protein is Ribose-phosphate pyrophosphokinase of Maricaulis maris (strain MCS10) (Caulobacter maris).